The sequence spans 248 residues: Ribosomal RNA small subunit methyltransferase J (248 aa).

S-adenosyl-L-methionine contacts are provided by residues 98 to 99 (RD), 114 to 115 (ER), 150 to 151 (SS), and aspartate 168.

The protein belongs to the methyltransferase superfamily. RsmJ family.

The protein localises to the cytoplasm. The enzyme catalyses guanosine(1516) in 16S rRNA + S-adenosyl-L-methionine = N(2)-methylguanosine(1516) in 16S rRNA + S-adenosyl-L-homocysteine + H(+). Specifically methylates the guanosine in position 1516 of 16S rRNA. The chain is Ribosomal RNA small subunit methyltransferase J from Shewanella baltica (strain OS185).